We begin with the raw amino-acid sequence, 512 residues long: Protein singed (512 aa).

This sequence belongs to the fascin family. Interacts with Rab35, with stronger binding to the Rab35-GTP form compared to the Rab35-GDP form.

Its subcellular location is the cytoplasm. The protein localises to the cytoskeleton. Its function is as follows. Acts as an actin bundling protein. May have a role in the asymmetric organization and/or movement of cytoplasmic components. It has a role in somatic cells during the formation of adult bristles and hairs, and in the female germline during oogenesis. The chain is Protein singed (sn) from Drosophila melanogaster (Fruit fly).